The sequence spans 414 residues: Imidazolonepropionase (414 aa).

The Fe(3+) site is built by His-95 and His-97. The Zn(2+) site is built by His-95 and His-97. Residues Arg-104, Tyr-162, and His-189 each coordinate 4-imidazolone-5-propanoate. Residue Tyr-162 participates in N-formimidoyl-L-glutamate binding. Position 252 (His-252) interacts with Fe(3+). His-252 is a binding site for Zn(2+). Gln-255 contributes to the 4-imidazolone-5-propanoate binding site. Residue Asp-326 participates in Fe(3+) binding. Zn(2+) is bound at residue Asp-326. The N-formimidoyl-L-glutamate site is built by Asn-328 and Gly-330. Ser-331 is a binding site for 4-imidazolone-5-propanoate.

Belongs to the metallo-dependent hydrolases superfamily. HutI family. Requires Zn(2+) as cofactor. It depends on Fe(3+) as a cofactor.

The protein resides in the cytoplasm. The catalysed reaction is 4-imidazolone-5-propanoate + H2O = N-formimidoyl-L-glutamate. It functions in the pathway amino-acid degradation; L-histidine degradation into L-glutamate; N-formimidoyl-L-glutamate from L-histidine: step 3/3. Functionally, catalyzes the hydrolytic cleavage of the carbon-nitrogen bond in imidazolone-5-propanoate to yield N-formimidoyl-L-glutamate. It is the third step in the universal histidine degradation pathway. The chain is Imidazolonepropionase from Streptomyces avermitilis (strain ATCC 31267 / DSM 46492 / JCM 5070 / NBRC 14893 / NCIMB 12804 / NRRL 8165 / MA-4680).